Reading from the N-terminus, the 508-residue chain is Erythropoietin receptor (508 aa).

An N-terminal signal peptide occupies residues 1–24 (MDHLGASLWPQVGSLCLLLAGAAW). Residues 25 to 250 (APPPNLPDPK…SLLTPSDLDP (226 aa)) are Extracellular-facing. Cys-52 and Cys-62 are joined by a disulfide. An N-linked (GlcNAc...) asparagine glycan is attached at Asn-76. An intrachain disulfide couples Cys-91 to Cys-107. Residues 147–247 (APVGLVARLA…EPVSLLTPSD (101 aa)) form the Fibronectin type-III domain. The short motif at 233 to 237 (WSAWS) is the WSXWS motif element. Residues 251–273 (LILTLSLILVVILVLLTVLALLS) traverse the membrane as a helical segment. At 274-508 (HRRALKQKIW…PLPPSYVACS (235 aa)) the chain is on the cytoplasmic side. Residue Lys-281 forms a Glycyl lysine isopeptide (Lys-Gly) (interchain with G-Cter in ubiquitin) linkage. Residues 282–290 (IWPGIPSPE) carry the Box 1 motif motif. Residues Tyr-368 and Tyr-426 each carry the phosphotyrosine; by JAK2 modification. Positions 452-457 (LKYLYL) match the ITIM motif motif. A Glycyl lysine isopeptide (Lys-Gly) (interchain with G-Cter in ubiquitin) cross-link involves residue Lys-453. Tyr-454, Tyr-456, Tyr-468, Tyr-485, Tyr-489, and Tyr-504 each carry phosphotyrosine; by JAK2. Positions 454 to 456 (YLY) are required for high-affinity SOCS3 binding. The interval 467–494 (DYSSGDSQGAQGGLSDGPYSNPYENSLI) is disordered.

This sequence belongs to the type I cytokine receptor family. Type 1 subfamily. In terms of assembly, forms homodimers on EPO stimulation. The tyrosine-phosphorylated form interacts with several SH2 domain-containing proteins including LYN, the adapter protein SH2B2, PTPN6, PTPN11, JAK2, PI3 kinases, STAT5A/B, SOCS3, CRKL. Interacts with INPP5D/SHIP1. SH2B2 binding inhibits the JAK-STAT signaling. Interacts with RHEX; this interaction occurs in a erythropoietin (EPO)-dependent manner. Interacts with ATXN2L. Post-translationally, on EPO stimulation, phosphorylated on C-terminal tyrosine residues by JAK2. The phosphotyrosine motifs are also recruitment sites for several SH2-containing proteins and adapter proteins which mediate cell proliferation. Phosphorylation on Tyr-454 is required for PTPN6 interaction, Tyr-426 for PTPN11. Tyr-426 is also required for SOCS3 binding, but Tyr-454/Tyr-456 motif is the preferred binding site. Ubiquitinated by the ECS(SOCS2) complex following ligand-binding and phosphorylation by JAK2, leading to its degradation by the proteasome. Regulation by the ECS(SOCS2) complex acts as a negative feedback loop of erythropoietin-mediated signaling pathway. Ubiquitination at Lys-281 mediates receptor internalization, whereas ubiquitination at Lys-453 promotes trafficking of activated receptors to the lysosomes for degradation. Ubiquitinated by NOSIP; appears to be either multi-monoubiquitinated or polyubiquitinated. Ubiquitination mediates proliferation and survival of EPO-dependent cells. Erythroid cells and erythroid progenitor cells. In terms of tissue distribution, isoform EPOR-F is the most abundant form in EPO-dependent erythroleukemia cells and in late-stage erythroid progenitors. As to expression, isoform EPOR-S and isoform EPOR-T are the predominant forms in bone marrow. Isoform EPOR-S and isoform EPOR-T are the predominant forms in bone marrow. Isoform EPOR-T is the most abundant from in early-stage erythroid progenitor cells.

The protein localises to the cell membrane. The protein resides in the secreted. Its function is as follows. Receptor for erythropoietin, which mediates erythropoietin-induced erythroblast proliferation and differentiation. Upon EPO stimulation, EPOR dimerizes triggering the JAK2/STAT5 signaling cascade. In some cell types, can also activate STAT1 and STAT3. May also activate the LYN tyrosine kinase. Functionally, acts as a dominant-negative receptor of EPOR-mediated signaling. The polypeptide is Erythropoietin receptor (Homo sapiens (Human)).